A 1257-amino-acid chain; its full sequence is Protein flightless-1 homolog (1257 aa).

LRR repeat units lie at residues 6–31 (LQFV…VEQM), 32–54 (TQMT…LSRC), 56–77 (NLEH…LSDL), 78–102 (PRLR…IFRM), 103–126 (KDLT…EYAK), 128–148 (SIVL…VCAN), 149–172 (LIDL…IRRL), 174–195 (MLQS…QLPS), 197–221 (TSLS…LDDM), 222–244 (HNLR…LFKL), 246–267 (NLRK…EGEW), 268–290 (ENLE…VVKL), 292–315 (RLTK…IGKL), 316–338 (IQLT…ISRC), 339–361 (VKLQ…IHLL), and 363–384 (DLKV…PNDA). Gelsolin-like repeat units lie at residues 523 to 600 (MDEA…EEFL), 640 to 714 (AVEM…PEFW), 759 to 832 (ELPK…MMFR), and 1168 to 1243 (EKTV…CRFR).

The protein belongs to the villin/gelsolin family.

Functionally, may play a key role in embryonic cellularization by interacting with both the cytoskeleton and other cellular components. The protein is Protein flightless-1 homolog (fli-1) of Caenorhabditis elegans.